The sequence spans 578 residues: Vesicular acetylcholine transporter (578 aa).

At 1 to 32 (MASFQIPVINLEVREVKDIVWEKIQEPVNQRR) the chain is on the cytoplasmic side. A helical transmembrane segment spans residues 33 to 53 (LILVIVSIALLLDNMLYMVIV). Residues 54–98 (PIIPDYLREIGSFDDGPTPPPLRDNITGKIIPVHHDHHGQDSATG) are Lumenal, vesicle-facing. Residue Asn78 is glycosylated (N-linked (GlcNAc...) asparagine). A helical transmembrane segment spans residues 99–119 (ILFASKAIVQLMVNPFSGGLI). The Cytoplasmic portion of the chain corresponds to 120 to 125 (DKIGYD). The chain crosses the membrane as a helical span at residues 126-146 (LPMMIGLTIMFFSTAVFACGS). Topologically, residues 147–154 (SYSVLFFA) are lumenal, vesicle. A helical membrane pass occupies residues 155–175 (RSLQGAGSAFADTAGLAMIAD). Over 176 to 187 (RFTEENERSQAL) the chain is Cytoplasmic. The helical transmembrane segment at 188–208 (GIALAFISFGCLVAPPFGGAL) threads the bilayer. At 209–215 (YQFAGKE) the chain is on the lumenal, vesicle side. The chain crosses the membrane as a helical span at residues 216 to 236 (VPFLILALVCLLDGLMLLLVM). The Cytoplasmic portion of the chain corresponds to 237–263 (KPVKEAMKQSKDVQDQVIPIWRLLMDP). A helical membrane pass occupies residues 264–284 (YIAVCAGALTMSNVALAFLEP). Residues 285–299 (TISLWMEDNMTTDNW) lie on the Lumenal, vesicle side of the membrane. N-linked (GlcNAc...) asparagine glycosylation occurs at Asn293. Residues 300–320 (KIGMVWLPAFFPHVLGVVITV) traverse the membrane as a helical segment. Over 321–330 (KMARKYPQHQ) the chain is Cytoplasmic. A helical transmembrane segment spans residues 331–351 (WLMAAGGLALEGFSCFIIPFC). Over 352-355 (SGYK) the chain is Lumenal, vesicle. Residues 356–376 (MLMLPICVICFGIALIDTALL) traverse the membrane as a helical segment. Residues 377 to 387 (PTLGYLVDVRY) are Cytoplasmic-facing. Residues 388 to 408 (VSVYGSIYAIADISYSIAYAV) form a helical membrane-spanning segment. Over 409–413 (GPIIA) the chain is Lumenal, vesicle. The chain crosses the membrane as a helical span at residues 414–434 (GGVVEAIGFTALNFLIAFSNL). The Cytoplasmic segment spans residues 435 to 578 (AYVPVLRKLR…APANPFRQGF (144 aa)). Composition is skewed to low complexity over residues 507-534 (EYQQ…EQGG) and 549-563 (QQQQ…QQVQ). A disordered region spans residues 507–578 (EYQQQQQGYQ…APANPFRQGF (72 aa)).

The protein belongs to the major facilitator superfamily. Vesicular transporter family.

The protein resides in the membrane. In terms of biological role, involved in acetylcholine transport into synaptic vesicles. This Drosophila melanogaster (Fruit fly) protein is Vesicular acetylcholine transporter (VAChT).